Consider the following 552-residue polypeptide: Putative acetolactate synthase large subunit IlvB2 (552 aa).

Thiamine diphosphate is bound at residue glutamate 48. FAD-binding positions include phenylalanine 262–serine 285 and aspartate 309–serine 328. The interval threonine 394–glutamine 474 is thiamine pyrophosphate binding. Aspartate 445 is a Mg(2+) binding site.

The protein belongs to the TPP enzyme family. As to quaternary structure, heterodimer of large catalytic subunit and small regulatory subunit. It depends on Mg(2+) as a cofactor. The cofactor is thiamine diphosphate.

The enzyme catalyses 2 pyruvate + H(+) = (2S)-2-acetolactate + CO2. Its pathway is amino-acid biosynthesis; L-isoleucine biosynthesis; L-isoleucine from 2-oxobutanoate: step 1/4. It participates in amino-acid biosynthesis; L-valine biosynthesis; L-valine from pyruvate: step 1/4. Functionally, catalyzes the conversion of 2 pyruvate molecules into acetolactate in the first common step of the biosynthetic pathway of the branched-amino acids such as leucine, isoleucine, and valine. The polypeptide is Putative acetolactate synthase large subunit IlvB2 (ilvB2) (Mycobacterium tuberculosis (strain ATCC 25618 / H37Rv)).